Reading from the N-terminus, the 216-residue chain is Probable transaldolase (216 aa).

Catalysis depends on K83, which acts as the Schiff-base intermediate with substrate.

It belongs to the transaldolase family. Type 3B subfamily.

The protein localises to the cytoplasm. It catalyses the reaction D-sedoheptulose 7-phosphate + D-glyceraldehyde 3-phosphate = D-erythrose 4-phosphate + beta-D-fructose 6-phosphate. The protein operates within carbohydrate degradation; pentose phosphate pathway; D-glyceraldehyde 3-phosphate and beta-D-fructose 6-phosphate from D-ribose 5-phosphate and D-xylulose 5-phosphate (non-oxidative stage): step 2/3. Its function is as follows. Transaldolase is important for the balance of metabolites in the pentose-phosphate pathway. The protein is Probable transaldolase of Sphingopyxis alaskensis (strain DSM 13593 / LMG 18877 / RB2256) (Sphingomonas alaskensis).